Consider the following 240-residue polypeptide: MADS-box transcription factor 27 (240 aa).

The MADS-box domain maps to methionine 1 to serine 61. Residues leucine 86 to glutamate 176 enclose the K-box domain. The segment covering leucine 220–alanine 231 has biased composition (polar residues). The tract at residues leucine 220 to proline 240 is disordered.

As to expression, ubiquitous.

Its subcellular location is the nucleus. Functionally, probable transcription factor. The protein is MADS-box transcription factor 27 (MADS27) of Oryza sativa subsp. japonica (Rice).